Reading from the N-terminus, the 231-residue chain is MAKVSKRVAANKAKIERTKFYPIDEALGLVKGCASAKFDESIDVAVQLGIDAKKSDQVVRGSVVLPAGTGKSVRVAVFAQGDKAEAAKAAGADIVGMEDLAEQVKAGNLNFDVVIASPDTMRIVGTLGQILGPRGLMPNPKVGTVTPDVAQAVKNAKAGQVQFRVDKAGIIHATIGRRSFEDTALKSNLAALLDALVKAKPATSKGVYLRKIAVSSTMGVGVRVEQASLSA.

The protein belongs to the universal ribosomal protein uL1 family. Part of the 50S ribosomal subunit.

Its function is as follows. Binds directly to 23S rRNA. The L1 stalk is quite mobile in the ribosome, and is involved in E site tRNA release. In terms of biological role, protein L1 is also a translational repressor protein, it controls the translation of the L11 operon by binding to its mRNA. In Cupriavidus pinatubonensis (strain JMP 134 / LMG 1197) (Cupriavidus necator (strain JMP 134)), this protein is Large ribosomal subunit protein uL1.